The primary structure comprises 360 residues: Phosphoserine aminotransferase (360 aa).

Arg-43 lines the L-glutamate pocket. Pyridoxal 5'-phosphate contacts are provided by residues 77 to 78, Trp-103, Thr-152, Asp-172, and Gln-195; that span reads AS. Lys-196 carries the N6-(pyridoxal phosphate)lysine modification. 237–238 contacts pyridoxal 5'-phosphate; the sequence is NT.

The protein belongs to the class-V pyridoxal-phosphate-dependent aminotransferase family. SerC subfamily. As to quaternary structure, homodimer. Requires pyridoxal 5'-phosphate as cofactor.

The protein resides in the cytoplasm. The enzyme catalyses O-phospho-L-serine + 2-oxoglutarate = 3-phosphooxypyruvate + L-glutamate. It catalyses the reaction 4-(phosphooxy)-L-threonine + 2-oxoglutarate = (R)-3-hydroxy-2-oxo-4-phosphooxybutanoate + L-glutamate. Its pathway is amino-acid biosynthesis; L-serine biosynthesis; L-serine from 3-phospho-D-glycerate: step 2/3. The protein operates within cofactor biosynthesis; pyridoxine 5'-phosphate biosynthesis; pyridoxine 5'-phosphate from D-erythrose 4-phosphate: step 3/5. Its function is as follows. Catalyzes the reversible conversion of 3-phosphohydroxypyruvate to phosphoserine and of 3-hydroxy-2-oxo-4-phosphonooxybutanoate to phosphohydroxythreonine. This Syntrophobacter fumaroxidans (strain DSM 10017 / MPOB) protein is Phosphoserine aminotransferase.